The primary structure comprises 173 residues: MAPKGKVGTRGKKQIFEENKETLKFYLRIILGANAIYCLVTLVFFYSSASFWAWMALGFSLAVYGASYHSMSSMARASFSEDGSLMDGGMDLNMEQGMAEHLKDVILLTAIVQVLSCFSLYIWSFWLLAPGRALYLLWVNVLGPWFTADSGAPAPELNEKRQRRQERRQMKRL.

An N-acetylmethionine modification is found at M1. 3 helical membrane-spanning segments follow: residues 25 to 45, 51 to 68, and 105 to 129; these read FYLR…LVFF, FWAW…GASY, and VILL…WLLA.

The protein belongs to the TMEM208 family.

It is found in the endoplasmic reticulum membrane. Its function is as follows. May function as a negative regulator of endoplasmic reticulum-stress induced autophagy. This is Transmembrane protein 208 (Tmem208) from Mus musculus (Mouse).